A 269-amino-acid chain; its full sequence is Thymidylate synthase (269 aa).

Arg21 serves as a coordination point for dUMP. A (6R)-5,10-methylene-5,6,7,8-tetrahydrofolate-binding site is contributed by His51. 126–127 (RR) lines the dUMP pocket. The Nucleophile role is filled by Cys146. Residues 171-174 (RSGD), Asn182, and 212-214 (HLY) each bind dUMP. Asp174 lines the (6R)-5,10-methylene-5,6,7,8-tetrahydrofolate pocket. (6R)-5,10-methylene-5,6,7,8-tetrahydrofolate is bound at residue Ala268.

Belongs to the thymidylate synthase family. Bacterial-type ThyA subfamily. As to quaternary structure, homodimer.

The protein localises to the cytoplasm. The catalysed reaction is dUMP + (6R)-5,10-methylene-5,6,7,8-tetrahydrofolate = 7,8-dihydrofolate + dTMP. It participates in pyrimidine metabolism; dTTP biosynthesis. Catalyzes the reductive methylation of 2'-deoxyuridine-5'-monophosphate (dUMP) to 2'-deoxythymidine-5'-monophosphate (dTMP) while utilizing 5,10-methylenetetrahydrofolate (mTHF) as the methyl donor and reductant in the reaction, yielding dihydrofolate (DHF) as a by-product. This enzymatic reaction provides an intracellular de novo source of dTMP, an essential precursor for DNA biosynthesis. The protein is Thymidylate synthase of Methylocella silvestris (strain DSM 15510 / CIP 108128 / LMG 27833 / NCIMB 13906 / BL2).